Here is a 251-residue protein sequence, read N- to C-terminus: Imidazole glycerol phosphate synthase subunit HisF (251 aa).

Catalysis depends on residues Asp11 and Asp130.

It belongs to the HisA/HisF family. As to quaternary structure, heterodimer of HisH and HisF.

It is found in the cytoplasm. It catalyses the reaction 5-[(5-phospho-1-deoxy-D-ribulos-1-ylimino)methylamino]-1-(5-phospho-beta-D-ribosyl)imidazole-4-carboxamide + L-glutamine = D-erythro-1-(imidazol-4-yl)glycerol 3-phosphate + 5-amino-1-(5-phospho-beta-D-ribosyl)imidazole-4-carboxamide + L-glutamate + H(+). It functions in the pathway amino-acid biosynthesis; L-histidine biosynthesis; L-histidine from 5-phospho-alpha-D-ribose 1-diphosphate: step 5/9. In terms of biological role, IGPS catalyzes the conversion of PRFAR and glutamine to IGP, AICAR and glutamate. The HisF subunit catalyzes the cyclization activity that produces IGP and AICAR from PRFAR using the ammonia provided by the HisH subunit. In Chlorobium phaeobacteroides (strain DSM 266 / SMG 266 / 2430), this protein is Imidazole glycerol phosphate synthase subunit HisF.